A 259-amino-acid polypeptide reads, in one-letter code: Glutamate racemase (259 aa).

Residues 9–10 and 41–42 contribute to the substrate site; these read DS and YG. Catalysis depends on cysteine 73, which acts as the Proton donor/acceptor. Substrate is bound at residue 74–75; it reads NT. Cysteine 183 (proton donor/acceptor) is an active-site residue. 184–185 is a binding site for substrate; it reads TH.

The protein belongs to the aspartate/glutamate racemases family.

The catalysed reaction is L-glutamate = D-glutamate. The protein operates within cell wall biogenesis; peptidoglycan biosynthesis. In terms of biological role, provides the (R)-glutamate required for cell wall biosynthesis. The chain is Glutamate racemase from Shewanella frigidimarina (strain NCIMB 400).